We begin with the raw amino-acid sequence, 653 residues long: Beta-galactosidase (653 aa).

The signal sequence occupies residues 1–22; it reads MPGVVRLLALLLVPLLLGSARG. A propeptide spanning residues 23-27 is cleaved from the precursor; the sequence is LHNAT. The N-linked (GlcNAc...) asparagine glycan is linked to Asn-25. Tyr-82 contacts substrate. N-linked (GlcNAc...) asparagine glycosylation occurs at Asn-96. Positions 128 and 186 each coordinate substrate. Catalysis depends on Glu-187, which acts as the Proton donor. Cys-194 and Cys-229 are disulfide-bonded. Asn-246 carries an N-linked (GlcNAc...) asparagine glycan. Glu-267 serves as the catalytic Nucleophile. Tyr-332 is a substrate binding site. Asn-463, Asn-497, and Asn-554 each carry an N-linked (GlcNAc...) asparagine glycan. Cys-625 and Cys-633 are oxidised to a cystine.

This sequence belongs to the glycosyl hydrolase 35 family. Homodimer. May form higher multimers.

It is found in the lysosome. The catalysed reaction is Hydrolysis of terminal non-reducing beta-D-galactose residues in beta-D-galactosides.. Its function is as follows. Cleaves beta-linked terminal galactosyl residues from gangliosides, glycoproteins, and glycosaminoglycans. The chain is Beta-galactosidase (GLB1) from Bos taurus (Bovine).